Here is a 96-residue protein sequence, read N- to C-terminus: Large ribosomal subunit protein uL23 (96 aa).

It belongs to the universal ribosomal protein uL23 family. Part of the 50S ribosomal subunit. Contacts protein L29, and trigger factor when it is bound to the ribosome.

One of the early assembly proteins it binds 23S rRNA. One of the proteins that surrounds the polypeptide exit tunnel on the outside of the ribosome. Forms the main docking site for trigger factor binding to the ribosome. This is Large ribosomal subunit protein uL23 from Brevibacillus brevis (strain 47 / JCM 6285 / NBRC 100599).